The primary structure comprises 234 residues: Triosephosphate isomerase (234 aa).

8–10 (NFK) provides a ligand contact to substrate. His90 functions as the Electrophile in the catalytic mechanism. The Proton acceptor role is filled by Glu159. Positions 165 and 197 each coordinate substrate.

It belongs to the triosephosphate isomerase family. As to quaternary structure, homodimer.

The protein localises to the cytoplasm. It carries out the reaction D-glyceraldehyde 3-phosphate = dihydroxyacetone phosphate. It functions in the pathway carbohydrate biosynthesis; gluconeogenesis. The protein operates within carbohydrate degradation; glycolysis; D-glyceraldehyde 3-phosphate from glycerone phosphate: step 1/1. Involved in the gluconeogenesis. Catalyzes stereospecifically the conversion of dihydroxyacetone phosphate (DHAP) to D-glyceraldehyde-3-phosphate (G3P). This Helicobacter pylori (strain G27) protein is Triosephosphate isomerase.